A 337-amino-acid chain; its full sequence is tRNA N6-adenosine threonylcarbamoyltransferase (337 aa).

Histidine 111 and histidine 115 together coordinate Fe cation. Substrate is bound by residues 134-138 (LVSGG), aspartate 167, glycine 180, and asparagine 272. Aspartate 300 is a binding site for Fe cation.

This sequence belongs to the KAE1 / TsaD family. Fe(2+) is required as a cofactor.

It localises to the cytoplasm. The enzyme catalyses L-threonylcarbamoyladenylate + adenosine(37) in tRNA = N(6)-L-threonylcarbamoyladenosine(37) in tRNA + AMP + H(+). Its function is as follows. Required for the formation of a threonylcarbamoyl group on adenosine at position 37 (t(6)A37) in tRNAs that read codons beginning with adenine. Is involved in the transfer of the threonylcarbamoyl moiety of threonylcarbamoyl-AMP (TC-AMP) to the N6 group of A37, together with TsaE and TsaB. TsaD likely plays a direct catalytic role in this reaction. This is tRNA N6-adenosine threonylcarbamoyltransferase from Pseudoalteromonas translucida (strain TAC 125).